The following is a 490-amino-acid chain: Beta-1,3-glucan-binding protein 1 (490 aa).

The first 19 residues, 1-19, serve as a signal peptide directing secretion; that stretch reads MYKQTVVIFLLCFFICVSC. Positions 20 to 119 constitute a CBM39 domain; the sequence is YEVPPAKLEA…GEWTVTGYVD (100 aa). The region spanning 152–490 is the GH16 domain; it reads PPTSQNTYPC…QVDYVRVYAL (339 aa). A glycan (N-linked (GlcNAc...) asparagine) is linked at Asn-372.

This sequence belongs to the insect beta-1,3-glucan binding protein family. Monomer. Hemolymph.

It localises to the secreted. Plays a role in the recognition of invading microorganisms activating the phenoloxidase cascade. Binds specifically to beta-1,3-glucan. Binds the Aspergillus niger cell wall component alpha-1,3-glucan, a fungal pathogen-associated molecular pattern (PAMP) that activates the host immune response. The sequence is that of Beta-1,3-glucan-binding protein 1 from Galleria mellonella (Greater wax moth).